Reading from the N-terminus, the 235-residue chain is Acyl-protein thioesterase 1 (235 aa).

Active-site charge relay system residues include serine 125, aspartate 181, and histidine 213.

This sequence belongs to the AB hydrolase superfamily. AB hydrolase 2 family.

The protein localises to the cytoplasm. The protein resides in the nucleus. It carries out the reaction S-hexadecanoyl-L-cysteinyl-[protein] + H2O = L-cysteinyl-[protein] + hexadecanoate + H(+). Functionally, hydrolyzes fatty acids from S-acylated cysteine residues in proteins with a strong preference for palmitoylated G-alpha proteins over other acyl substrates. Mediates the deacylation of G-alpha proteins such as GPA1 in vivo, but has weak or no activity toward palmitoylated Ras proteins. Has weak lysophospholipase activity in vitro; however such activity may not exist in vivo. The polypeptide is Acyl-protein thioesterase 1 (Gibberella zeae (strain ATCC MYA-4620 / CBS 123657 / FGSC 9075 / NRRL 31084 / PH-1) (Wheat head blight fungus)).